Here is a 205-residue protein sequence, read N- to C-terminus: FMN-dependent NADH:quinone oxidoreductase (205 aa).

Residues S10, 16-18 (SHS), and 96-99 (MYNF) contribute to the FMN site.

The protein belongs to the azoreductase type 1 family. Homodimer. It depends on FMN as a cofactor.

The catalysed reaction is 2 a quinone + NADH + H(+) = 2 a 1,4-benzosemiquinone + NAD(+). The enzyme catalyses N,N-dimethyl-1,4-phenylenediamine + anthranilate + 2 NAD(+) = 2-(4-dimethylaminophenyl)diazenylbenzoate + 2 NADH + 2 H(+). Functionally, quinone reductase that provides resistance to thiol-specific stress caused by electrophilic quinones. Its function is as follows. Also exhibits azoreductase activity. Catalyzes the reductive cleavage of the azo bond in aromatic azo compounds to the corresponding amines. In Nostoc punctiforme (strain ATCC 29133 / PCC 73102), this protein is FMN-dependent NADH:quinone oxidoreductase.